We begin with the raw amino-acid sequence, 131 residues long: Large ribosomal subunit protein eL32 (131 aa).

This sequence belongs to the eukaryotic ribosomal protein eL32 family. As to quaternary structure, component of the large ribosomal subunit. Mature ribosomes consist of a small (40S) and a large (60S) subunit. The 40S subunit contains about 32 different proteins and 1 molecule of RNA (18S). The 60S subunit contains 45 different proteins and 3 molecules of RNA (25S, 5.8S and 5S).

The protein resides in the cytoplasm. Functionally, component of the ribosome, a large ribonucleoprotein complex responsible for the synthesis of proteins in the cell. The small ribosomal subunit (SSU) binds messenger RNAs (mRNAs) and translates the encoded message by selecting cognate aminoacyl-transfer RNA (tRNA) molecules. The large subunit (LSU) contains the ribosomal catalytic site termed the peptidyl transferase center (PTC), which catalyzes the formation of peptide bonds, thereby polymerizing the amino acids delivered by tRNAs into a polypeptide chain. The nascent polypeptides leave the ribosome through a tunnel in the LSU and interact with protein factors that function in enzymatic processing, targeting, and the membrane insertion of nascent chains at the exit of the ribosomal tunnel. The sequence is that of Large ribosomal subunit protein eL32 from Candida albicans (strain SC5314 / ATCC MYA-2876) (Yeast).